A 113-amino-acid polypeptide reads, in one-letter code: Cell cycle protein GpsB (113 aa).

A coiled-coil region spans residues 36 to 65 (IKDYETYAALVKSLRQEIADLKEELARKPQ). The disordered stretch occupies residues 61–82 (ARKPQVSSAPSPSHPDPIDVAA).

It belongs to the GpsB family. As to quaternary structure, forms polymers through the coiled coil domains. Interacts with PBP1, MreC and EzrA.

It localises to the cytoplasm. In terms of biological role, divisome component that associates with the complex late in its assembly, after the Z-ring is formed, and is dependent on DivIC and PBP2B for its recruitment to the divisome. Together with EzrA, is a key component of the system that regulates PBP1 localization during cell cycle progression. Its main role could be the removal of PBP1 from the cell pole after pole maturation is completed. Also contributes to the recruitment of PBP1 to the division complex. Not essential for septum formation. The sequence is that of Cell cycle protein GpsB from Streptococcus pneumoniae (strain Hungary19A-6).